A 605-amino-acid chain; its full sequence is Alpha-1,3-galactosidase B (605 aa).

Residues 1 to 19 (MKRIIFNFCFVWLAVSAFA) form the signal peptide. 3 PbH1 repeats span residues 428 to 450 (CPEVYFADNVIRNNRARGTLFST), 451 to 473 (PLKTVVERNLFDHTSGTAILLCG), and 484 to 538 (CRNV…VIED).

The protein belongs to the glycosyl hydrolase 110 family. B subfamily.

The enzyme catalyses Hydrolysis of terminal, non-reducing branched (1-&gt;3)-alpha-D-galactosidic residues, producing free D-galactose.. It carries out the reaction Hydrolysis of terminal, non-reducing linear (1-&gt;3)-alpha-D-galactosidic residues, producing free D-galactose.. It catalyses the reaction Hydrolysis of terminal, non-reducing alpha-D-galactose residues in alpha-D-galactosides, including galactose oligosaccharides, galactomannans and galactolipids.. Its function is as follows. Alpha-galactosidase. Removes both branched alpha-1,3-linked galactose residues of blood group B antigens and linear alpha-1,3-linked galactose structures. The protein is Alpha-1,3-galactosidase B (glaB2) of Phocaeicola vulgatus (strain ATCC 8482 / DSM 1447 / JCM 5826 / CCUG 4940 / NBRC 14291 / NCTC 11154) (Bacteroides vulgatus).